The primary structure comprises 1032 residues: Integrin alpha-4 (1032 aa).

The signal sequence occupies residues Met-1 to Cys-34. Topologically, residues Tyr-35 to Val-974 are extracellular. FG-GAP repeat units lie at residues Asn-36–Thr-100, Lys-113–Ser-177, Asp-186–Ser-237, Tyr-238–Leu-291, Thr-292–Glu-351, Leu-353–Pro-411, and Gln-415–Thr-477. N-linked (GlcNAc...) asparagine glycosylation is found at Asn-81 and Asn-98. 3 disulfide bridges follow: Cys-91–Cys-101, Cys-144–Cys-165, and Cys-183–Cys-198. The N-linked (GlcNAc...) asparagine glycan is linked to Asn-229. Residues Asp-314, Asn-316, Asp-318, Leu-320, Asp-322, Asp-376, Asp-378, Asp-380, Asp-384, Asp-438, Asp-440, Asn-442, Tyr-444, and Asp-446 each coordinate Ca(2+). Residue Asn-479 is glycosylated (N-linked (GlcNAc...) asparagine). Cys-485 and Cys-494 are joined by a disulfide. Asn-496, Asn-517, Asn-537, Asn-626, and Asn-660 each carry an N-linked (GlcNAc...) asparagine glycan. Intrachain disulfides connect Cys-500–Cys-556 and Cys-622–Cys-627. Cys-698 and Cys-712 are oxidised to a cystine. N-linked (GlcNAc...) asparagine glycans are attached at residues Asn-746 and Asn-857. 2 disulfide bridges follow: Cys-853–Cys-889 and Cys-896–Cys-901. A helical transmembrane segment spans residues Ile-975–Trp-998. Residues Lys-999–Lys-1032 are Cytoplasmic-facing. The GFFKR motif motif lies at Gly-1001–Arg-1005.

Belongs to the integrin alpha chain family. As to quaternary structure, heterodimer of an alpha and a beta subunit.

It localises to the membrane. Fibronectin and V-CAM adhesion receptor. The polypeptide is Integrin alpha-4 (itga4) (Xenopus laevis (African clawed frog)).